Here is a 37-residue protein sequence, read N- to C-terminus: Esculentin-2Ra (37 aa).

The cysteines at positions 31 and 37 are disulfide-linked.

In terms of tissue distribution, expressed by the skin glands.

The protein localises to the secreted. Its function is as follows. Antimicrobial peptide. This Pelophylax ridibundus (Marsh frog) protein is Esculentin-2Ra.